We begin with the raw amino-acid sequence, 467 residues long: Serum response factor homolog B (467 aa).

Over residues 1–15 the composition is skewed to polar residues; that stretch reads MELNMNQYDNIESND. Disordered regions lie at residues 1–38, 115–245, and 301–467; these read MELNMNQYDNIESNDSPPTPSSPGEEGNVEKKEKKSGR, NTPD…NNLT, and IQNI…PSDL. The MADS-box domain occupies 36–96; sequence SGRRKINIEF…GHVYTFATPK (61 aa). Low complexity predominate over residues 128–205; sequence NNNNGNNSNN…NNNNNNNNNN (78 aa). Residues 206 to 220 are compositionally biased toward basic and acidic residues; it reads CKEEQNMNIPNERKS. Low complexity-rich tracts occupy residues 222-245, 301-334, 347-392, and 401-440; these read NNINNNNNNQNNNQNNNQNNNNLT, IQNISGGSGNNSNGYINGNGMNGNNNNNNNSNNI, GSNS…NSNN, and PSPIISQPLPSIPSPSSSSSNIGNSGYSSPFSTSFSYGGY. Polar residues predominate over residues 442–467; sequence QPFSRNYPLQSNIATNSTVSKAPSDL.

The protein resides in the nucleus. In Dictyostelium discoideum (Social amoeba), this protein is Serum response factor homolog B (srfB).